The chain runs to 995 residues: Probable copper-transporting ATPase HMA5 (995 aa).

The Cytoplasmic portion of the chain corresponds to M1–S299. HMA domains are found at residues S51–S117 and Q129–V195. Cu(+) is bound by residues C62, C65, C140, and C143. In terms of domain architecture, HMA 3; degenerate spans S204–S270. The helical transmembrane segment at F300–P321 threads the bilayer. The Extracellular segment spans residues G322 to I340. The chain crosses the membrane as a helical span at residues I341–G360. Residues S361–R367 lie on the Cytoplasmic side of the membrane. A helical transmembrane segment spans residues G368–L388. At Y389–F406 the chain is on the extracellular side. The chain crosses the membrane as a helical span at residues E407–K427. At G428–R561 the chain is on the cytoplasmic side. A helical membrane pass occupies residues I562–A584. Residues G585 to A605 are Extracellular-facing. The helical transmembrane segment at L606–L623 threads the bilayer. Residues A624–I920 are Cytoplasmic-facing. The active-site 4-aspartylphosphate intermediate is D661. D866 and D870 together coordinate Mg(2+). The helical transmembrane segment at R921–G940 threads the bilayer. The Extracellular segment spans residues V941–P952. Residues W953–L971 traverse the membrane as a helical segment. At L972–V995 the chain is on the cytoplasmic side.

This sequence belongs to the cation transport ATPase (P-type) (TC 3.A.3) family. Type IB subfamily. In terms of assembly, interacts with ATX1. As to expression, expressed in roots and flowers.

The protein localises to the membrane. The enzyme catalyses Cu(+)(in) + ATP + H2O = Cu(+)(out) + ADP + phosphate + H(+). Functionally, involved in copper import into the cell. May play a role in copper detoxification in roots. In Arabidopsis thaliana (Mouse-ear cress), this protein is Probable copper-transporting ATPase HMA5 (HMA5).